Here is a 223-residue protein sequence, read N- to C-terminus: 7-cyano-7-deazaguanine synthase (223 aa).

Residue 8–18 (LSGGLDSATTL) participates in ATP binding. Positions 187, 197, 200, and 203 each coordinate Zn(2+).

It belongs to the QueC family. It depends on Zn(2+) as a cofactor.

The catalysed reaction is 7-carboxy-7-deazaguanine + NH4(+) + ATP = 7-cyano-7-deazaguanine + ADP + phosphate + H2O + H(+). It participates in purine metabolism; 7-cyano-7-deazaguanine biosynthesis. In terms of biological role, catalyzes the ATP-dependent conversion of 7-carboxy-7-deazaguanine (CDG) to 7-cyano-7-deazaguanine (preQ(0)). The polypeptide is 7-cyano-7-deazaguanine synthase (Methylococcus capsulatus (strain ATCC 33009 / NCIMB 11132 / Bath)).